Reading from the N-terminus, the 95-residue chain is uncharacterized protein (95 aa).

Repeat copies occupy residues 67 to 74 (GCGCGCGC) and 85 to 92 (CGGCCGCG). Positions 67 to 92 (GCGCGCGCATVAAVSPVPCGGCCGCG) are 2 X 8 AA approximate repeats.

This is an uncharacterized protein from Caenorhabditis elegans.